Reading from the N-terminus, the 253-residue chain is uncharacterized protein (253 aa).

It belongs to the DcsA family.

This is an uncharacterized protein from Bacillus subtilis (strain 168).